The primary structure comprises 246 residues: Probable hydroxyethylthiazole kinase (246 aa).

Methionine 50 is a binding site for substrate. Residues arginine 125 and threonine 145 each coordinate ATP. Glycine 172 contacts substrate.

This sequence belongs to the Thz kinase family. Requires Mg(2+) as cofactor.

The enzyme catalyses 5-(2-hydroxyethyl)-4-methylthiazole + ATP = 4-methyl-5-(2-phosphooxyethyl)-thiazole + ADP + H(+). The protein operates within cofactor biosynthesis; thiamine diphosphate biosynthesis; 4-methyl-5-(2-phosphoethyl)-thiazole from 5-(2-hydroxyethyl)-4-methylthiazole: step 1/1. In terms of biological role, catalyzes the phosphorylation of the hydroxyl group of 4-methyl-5-beta-hydroxyethylthiazole (THZ). This chain is Probable hydroxyethylthiazole kinase (thiM), found in Agrobacterium fabrum (strain C58 / ATCC 33970) (Agrobacterium tumefaciens (strain C58)).